Here is a 328-residue protein sequence, read N- to C-terminus: Tetraacyldisaccharide 4'-kinase (328 aa).

Thr-55 to Thr-62 lines the ATP pocket.

This sequence belongs to the LpxK family.

The catalysed reaction is a lipid A disaccharide + ATP = a lipid IVA + ADP + H(+). It participates in glycolipid biosynthesis; lipid IV(A) biosynthesis; lipid IV(A) from (3R)-3-hydroxytetradecanoyl-[acyl-carrier-protein] and UDP-N-acetyl-alpha-D-glucosamine: step 6/6. Its function is as follows. Transfers the gamma-phosphate of ATP to the 4'-position of a tetraacyldisaccharide 1-phosphate intermediate (termed DS-1-P) to form tetraacyldisaccharide 1,4'-bis-phosphate (lipid IVA). This Shigella boydii serotype 4 (strain Sb227) protein is Tetraacyldisaccharide 4'-kinase.